The following is a 703-amino-acid chain: uncharacterized protein (703 aa).

4 helical membrane passes run 23–43 (IAMSGAISAGAYSAGVFDFLI), 69–89 (ALSGASAGAITAAIGVIAAGG), 143–163 (PVISVLNANVLTAIGAEALEA), and 250–270 (PPEWLAFANAALASGAFPIGL). The region spanning 23–335 (IAMSGAISAG…INNDPFEFVR (313 aa)) is the PNPLA domain. The GXSXG motif lies at 72–76 (GASAG). Catalysis depends on Ser74, which acts as the Nucleophile. The active-site Proton acceptor is the Asp322. The short motif at 322–324 (DGG) is the DGA/G element. 3 consecutive transmembrane segments (helical) span residues 357–377 (VIMIAPFPEGPPFLGDGEPPL), 432–452 (ETFSIASGLLGGFGGFVLEAF), and 644–664 (ILSTLAGAAGANCQVWLAPWT).

The protein resides in the cell membrane. This is an uncharacterized protein from Sinorhizobium fredii (strain NBRC 101917 / NGR234).